The following is a 329-amino-acid chain: BRISC and BRCA1-A complex member 1 (329 aa).

Methionine 1 is subject to N-acetylmethionine. The tract at residues 1–84 is disordered; the sequence is MEVAEPSSPT…VPPPAPEVQI (84 aa). Position 8 is a phosphoserine (serine 8). The span at 10-19 shows a compositional bias: acidic residues; it reads TEEEEEEEEH. Phosphoserine is present on residues serine 29, serine 49, serine 57, and serine 62. Threonine 65 bears the Phosphothreonine mark. Serine 66 carries the post-translational modification Phosphoserine. The segment at 95 to 298 is VWFA-like; it reads VIICLDLSEE…LELHNCMAKL (204 aa).

This sequence belongs to the BABAM1 family. Component of the ARISC complex, at least composed of UIMC1/RAP80, ABRAXAS1, BRCC3/BRCC36, BABAM2 and BABAM1/NBA1. Component of the BRCA1-A complex, at least composed of BRCA1, BARD1, UIMC1/RAP80, ABRAXAS1, BRCC3/BRCC36, BABAM2 and BABAM1/NBA1. In the BRCA1-A complex, interacts directly with ABRAXAS1 and BABAM2. Component of the BRISC complex, at least composed of ABRAXAS2, BRCC3/BRCC36, BABAM2 and BABAM1/NBA1. Identified in a complex with SHMT2 and the other subunits of the BRISC complex.

The protein resides in the cytoplasm. Its subcellular location is the nucleus. Component of the BRCA1-A complex, a complex that specifically recognizes 'Lys-63'-linked ubiquitinated histones H2A and H2AX at DNA lesions sites, leading to target the BRCA1-BARD1 heterodimer to sites of DNA damage at double-strand breaks (DSBs). The BRCA1-A complex also possesses deubiquitinase activity that specifically removes 'Lys-63'-linked ubiquitin on histones H2A and H2AX. In the BRCA1-A complex, it is required for the complex integrity and its localization at DSBs. Component of the BRISC complex, a multiprotein complex that specifically cleaves 'Lys-63'-linked ubiquitin in various substrates. In these 2 complexes, it is probably required to maintain the stability of BABAM2 and help the 'Lys-63'-linked deubiquitinase activity mediated by BRCC3/BRCC36 component. The BRISC complex is required for normal mitotic spindle assembly and microtubule attachment to kinetochores via its role in deubiquitinating NUMA1. Plays a role in interferon signaling via its role in the deubiquitination of the interferon receptor IFNAR1; deubiquitination increases IFNAR1 activity by enhancing its stability and cell surface expression. Down-regulates the response to bacterial lipopolysaccharide (LPS) via its role in IFNAR1 deubiquitination. In Homo sapiens (Human), this protein is BRISC and BRCA1-A complex member 1 (BABAM1).